A 790-amino-acid chain; its full sequence is Ribonucleoside-diphosphate reductase large subunit (790 aa).

Substrate is bound by residues T208, 223-224 (SC), G254, 436-440 (NLCTE), and 621-625 (PTVSS). A disulfide bridge links C224 with C453. The active-site Proton acceptor is the N436. C438 functions as the Cysteine radical intermediate in the catalytic mechanism. E440 serves as the catalytic Proton acceptor.

It belongs to the ribonucleoside diphosphate reductase large chain family. In terms of assembly, heterotetramer composed of a homodimer of the large subunit (R1) and a homodimer of the small subunit (R2). Larger multisubunit protein complex are also active, composed of (R1)n(R2)n.

It carries out the reaction a 2'-deoxyribonucleoside 5'-diphosphate + [thioredoxin]-disulfide + H2O = a ribonucleoside 5'-diphosphate + [thioredoxin]-dithiol. Its function is as follows. Ribonucleoside-diphosphate reductase holoenzyme provides the precursors necessary for viral DNA synthesis. Allows virus growth in non-dividing cells, as well as reactivation from latency in infected hosts. Catalyzes the biosynthesis of deoxyribonucleotides from the corresponding ribonucleotides. The sequence is that of Ribonucleoside-diphosphate reductase large subunit from Equus caballus (Horse).